We begin with the raw amino-acid sequence, 494 residues long: MSQSRTYQVRTYGCQMNVHDSERLSGLLEAAGYQRAAEGTTPDVVVFNTCAVRENADNRLYGNLGQLRPVKDANPDMQIAVGGCLAQKDRGEIIRRAPWVDVVFGTHNIGSLPALLERARVQREAQVEIVESLERFPSTLPTRRESVYAAWVAISVGCNNTCTFCIVPALRGKEKDRRPGDILAEIRAVVAEGAIEVTLLGQNVNAYGSEFGDRQAFSKLLRACGEIEGLERVRFTSPHPRDFTDDVIAAMAETPNVMPQLHMPLQSGSDRILRAMRRSYRAERFLRIVEKVREAIPDAAITTDVIVGFPGETEEDFAETLRVMEEVRFAHAFTFQYSKRPGTPAASMDNQVPREVVKERYQRLLELQERISEEENAKFVGREVEVLVAEGEGRKDDVHRRMSGRARDNRLVHFAVDEGVTVRPGDMVTVEVTYAAPHHLVADSGIRNLRRTRAGDAWEARNAPERRPTGVLLGMPKVGAPEPQPSVVGGCCDS.

In terms of domain architecture, MTTase N-terminal spans 5–121 (RTYQVRTYGC…LPALLERARV (117 aa)). [4Fe-4S] cluster-binding residues include Cys-14, Cys-50, Cys-84, Cys-158, Cys-162, and Cys-165. Residues 144–374 (RESVYAAWVA…LELQERISEE (231 aa)) form the Radical SAM core domain. In terms of domain architecture, TRAM spans 377-446 (AKFVGREVEV…PHHLVADSGI (70 aa)). Residues 458 to 468 (WEARNAPERRP) are compositionally biased toward basic and acidic residues. The interval 458 to 494 (WEARNAPERRPTGVLLGMPKVGAPEPQPSVVGGCCDS) is disordered.

The protein belongs to the methylthiotransferase family. MiaB subfamily. Monomer. [4Fe-4S] cluster is required as a cofactor.

The protein localises to the cytoplasm. The enzyme catalyses N(6)-dimethylallyladenosine(37) in tRNA + (sulfur carrier)-SH + AH2 + 2 S-adenosyl-L-methionine = 2-methylsulfanyl-N(6)-dimethylallyladenosine(37) in tRNA + (sulfur carrier)-H + 5'-deoxyadenosine + L-methionine + A + S-adenosyl-L-homocysteine + 2 H(+). Functionally, catalyzes the methylthiolation of N6-(dimethylallyl)adenosine (i(6)A), leading to the formation of 2-methylthio-N6-(dimethylallyl)adenosine (ms(2)i(6)A) at position 37 in tRNAs that read codons beginning with uridine. This chain is tRNA-2-methylthio-N(6)-dimethylallyladenosine synthase, found in Thermobifida fusca (strain YX).